Consider the following 338-residue polypeptide: Putative transport protein TM_1349 (338 aa).

7 helical membrane passes run 20 to 40 (ILIS…IVLM), 68 to 88 (ALLL…PPVF), 147 to 167 (VSVT…VFYI), 203 to 223 (VIFI…EAFN), 239 to 259 (FIPI…SLTL), 263 to 283 (GVLL…VVFI), and 297 to 317 (IILS…FVGV).

It belongs to the autoinducer-2 exporter (AI-2E) (TC 2.A.86) family.

It is found in the cell membrane. This is Putative transport protein TM_1349 from Thermotoga maritima (strain ATCC 43589 / DSM 3109 / JCM 10099 / NBRC 100826 / MSB8).